Reading from the N-terminus, the 378-residue chain is Actin-related protein 2/3 complex subunit 1B (378 aa).

7 WD repeats span residues Arg-8–Arg-47, Lys-53–Thr-92, Arg-97–Lys-138, Arg-143–Lys-182, Leu-203–Gln-242, Ile-257–Ser-295, and Val-331–Gly-375. The tract at residues Thr-319 to Val-340 is disordered.

The protein belongs to the WD repeat ARPC1 family. In terms of assembly, component of the Arp2/3 complex composed of ARP2, ARP3, ARPC1/p41-ARC, ARPC2/p34-ARC, ARPC3/p21-ARC, ARPC4/p20-ARC and ARPC5/p16-ARC. Expressed at low levels in all tissues with a relatively highest expression in inflorescences.

Its subcellular location is the cytoplasm. The protein localises to the cytoskeleton. Its function is as follows. Functions as a component of the Arp2/3 complex which is involved in regulation of actin polymerization and together with an activating nucleation-promoting factor (NPF) mediates the formation of branched actin networks. Arp2/3 complex plays a critical role in the control of cell morphogenesis via the modulation of cell polarity development. This is Actin-related protein 2/3 complex subunit 1B (ARPC1B) from Arabidopsis thaliana (Mouse-ear cress).